A 185-amino-acid chain; its full sequence is Ribose 1,5-bisphosphate phosphokinase PhnN (185 aa).

ATP is bound at residue 10 to 17; it reads GPSGSGKD.

This sequence belongs to the ribose 1,5-bisphosphokinase family.

It carries out the reaction alpha-D-ribose 1,5-bisphosphate + ATP = 5-phospho-alpha-D-ribose 1-diphosphate + ADP. It participates in metabolic intermediate biosynthesis; 5-phospho-alpha-D-ribose 1-diphosphate biosynthesis; 5-phospho-alpha-D-ribose 1-diphosphate from D-ribose 5-phosphate (route II): step 3/3. In terms of biological role, catalyzes the phosphorylation of ribose 1,5-bisphosphate to 5-phospho-D-ribosyl alpha-1-diphosphate (PRPP). Accepts ATP but not GTP as a phosphoryl donor, and uses ribose 1,5-bisphosphate but not ribose, ribose 1-phosphate, or ribose 5-phosphate as a phosphoryl acceptor. This chain is Ribose 1,5-bisphosphate phosphokinase PhnN (phnN), found in Escherichia coli (strain K12).